Reading from the N-terminus, the 494-residue chain is Alpha-amylase-related protein (494 aa).

The N-terminal stretch at 1-20 is a signal peptide; that stretch reads MFKFTFALALCVLAAGLVLA. Q21 is subject to Pyrrolidone carboxylic acid. C48 and C104 form a disulfide bridge. Ca(2+) is bound by residues N118, Q169, and D178. Residues C157 and C171 are joined by a disulfide bond. R206 lines the chloride pocket. D208 functions as the Nucleophile in the catalytic mechanism. H212 lines the Ca(2+) pocket. The active-site Proton donor is the E245. The chloride site is built by N308 and R343. 3 cysteine pairs are disulfide-bonded: C376–C382, C418–C441, and C448–C460.

It belongs to the glycosyl hydrolase 13 family. As to quaternary structure, monomer. Ca(2+) is required as a cofactor. Chloride serves as cofactor.

The protein resides in the secreted. It catalyses the reaction Endohydrolysis of (1-&gt;4)-alpha-D-glucosidic linkages in polysaccharides containing three or more (1-&gt;4)-alpha-linked D-glucose units.. The protein is Alpha-amylase-related protein (Amyrel) of Drosophila pseudoobscura pseudoobscura (Fruit fly).